A 739-amino-acid polypeptide reads, in one-letter code: Polyribonucleotide nucleotidyltransferase (739 aa).

2 residues coordinate Mg(2+): Asp489 and Asp495. The region spanning 556–615 is the KH domain; sequence PKIDTIKIDVDKIKIVIGKGGETIDKIIAETGVKIDIDEDGLVAIFSPDRAAIERTKEII. The S1 motif domain occupies 625 to 693; it reads DEVFQAKVVR…DKGRIDASMK (69 aa). Residues 699–739 form a disordered region; the sequence is PEGYVEPEKRERSEKPRRHKEHKEKKDNNFGEFKFHKVDKK. Residues 722 to 739 show a composition bias toward basic and acidic residues; that stretch reads EKKDNNFGEFKFHKVDKK.

This sequence belongs to the polyribonucleotide nucleotidyltransferase family. Mg(2+) serves as cofactor.

It localises to the cytoplasm. It catalyses the reaction RNA(n+1) + phosphate = RNA(n) + a ribonucleoside 5'-diphosphate. Its function is as follows. Involved in mRNA degradation. Catalyzes the phosphorolysis of single-stranded polyribonucleotides processively in the 3'- to 5'-direction. In Streptococcus suis (strain 98HAH33), this protein is Polyribonucleotide nucleotidyltransferase.